Reading from the N-terminus, the 332-residue chain is MSDFAFFALETLIKCIIIIAIFASLAGLATYAERKVLAYFQRRIGPDMVGPFGLIQLVADMIKLFTKEDIIPSNSQKFIFAIAPLISAICAFVSLAAIPMLPEFTLFGRVIQPIVADINVALLFVIGTSGLCFYAVFLGGLASNNKWSILGAARGLVSIISYESVGALALIAIIMLVGSFSLVDINNYQSDGFFSWLIFKQPLAFVLFIIALFIETNRTPLCLTENDAEIVAGYGTEYSGLRWGIFFIGEYTSMIAGAILVTLLFLGGFNSFWIIPGWIMMIVKSSFIFFWYFWARAAFPQLRPDQVMKMCYLILIPLAVLNLLITALTVLL.

A run of 9 helical transmembrane segments spans residues 4 to 24, 44 to 64, 78 to 98, 120 to 140, 165 to 185, 194 to 214, 255 to 275, 279 to 299, and 312 to 332; these read FAFFALETLIKCIIIIAIFAS, IGPDMVGPFGLIQLVADMIKL, FIFAIAPLISAICAFVSLAAI, VALLFVIGTSGLCFYAVFLGG, VGALALIAIIMLVGSFSLVDI, FSWLIFKQPLAFVLFIIALFI, IAGAILVTLLFLGGFNSFWII, IMMIVKSSFIFFWYFWARAAF, and YLILIPLAVLNLLITALTVLL.

This sequence belongs to the complex I subunit 1 family. As to quaternary structure, NDH-1 is composed of 14 different subunits. Subunits NuoA, H, J, K, L, M, N constitute the membrane sector of the complex.

The protein localises to the cell inner membrane. It carries out the reaction a quinone + NADH + 5 H(+)(in) = a quinol + NAD(+) + 4 H(+)(out). Functionally, NDH-1 shuttles electrons from NADH, via FMN and iron-sulfur (Fe-S) centers, to quinones in the respiratory chain. The immediate electron acceptor for the enzyme in this species is believed to be ubiquinone. Couples the redox reaction to proton translocation (for every two electrons transferred, four hydrogen ions are translocated across the cytoplasmic membrane), and thus conserves the redox energy in a proton gradient. This subunit may bind ubiquinone. This chain is NADH-quinone oxidoreductase subunit H, found in Campylobacter jejuni subsp. jejuni serotype O:23/36 (strain 81-176).